A 64-amino-acid chain; its full sequence is Large ribosomal subunit protein uL30 (64 aa).

This sequence belongs to the universal ribosomal protein uL30 family. In terms of assembly, part of the 50S ribosomal subunit.

The chain is Large ribosomal subunit protein uL30 from Desulforudis audaxviator (strain MP104C).